We begin with the raw amino-acid sequence, 113 residues long: uncharacterized protein (113 aa).

Disordered regions lie at residues 1 to 22 and 90 to 113; these read MGEHAIKRHMRQRKPTKHPLAQ and DGRHTTESSFEHSSPSRSPQSDDL. The segment covering 90–99 has biased composition (basic and acidic residues); sequence DGRHTTESSF. Positions 100 to 113 are enriched in low complexity; sequence EHSSPSRSPQSDDL.

This is an uncharacterized protein from Mycobacterium tuberculosis (strain CDC 1551 / Oshkosh).